We begin with the raw amino-acid sequence, 227 residues long: Cytochrome c oxidase subunit 2 (227 aa).

Residues 1 to 14 are Mitochondrial intermembrane-facing; it reads MAYPFQLGFQDATS. Residues 15–45 traverse the membrane as a helical segment; it reads PIMEELLHFHDHTLMIVFLISSLVLYIISSM. Residues 46-59 are Mitochondrial matrix-facing; that stretch reads LTTKLTHTSTMDAQ. Residues 60–87 traverse the membrane as a helical segment; sequence EVETIWTILPAIILILIALPSLRILYMM. Residues 88–227 are Mitochondrial intermembrane-facing; the sequence is DEINNPSLTV…YFEEWSASML (140 aa). Residues histidine 161, cysteine 196, glutamate 198, cysteine 200, histidine 204, and methionine 207 each coordinate Cu cation. Glutamate 198 lines the Mg(2+) pocket.

The protein belongs to the cytochrome c oxidase subunit 2 family. Component of the cytochrome c oxidase (complex IV, CIV), a multisubunit enzyme composed of 14 subunits. The complex is composed of a catalytic core of 3 subunits MT-CO1, MT-CO2 and MT-CO3, encoded in the mitochondrial DNA, and 11 supernumerary subunits COX4I, COX5A, COX5B, COX6A, COX6B, COX6C, COX7A, COX7B, COX7C, COX8 and NDUFA4, which are encoded in the nuclear genome. The complex exists as a monomer or a dimer and forms supercomplexes (SCs) in the inner mitochondrial membrane with NADH-ubiquinone oxidoreductase (complex I, CI) and ubiquinol-cytochrome c oxidoreductase (cytochrome b-c1 complex, complex III, CIII), resulting in different assemblies (supercomplex SCI(1)III(2)IV(1) and megacomplex MCI(2)III(2)IV(2)). Found in a complex with TMEM177, COA6, COX18, COX20, SCO1 and SCO2. Interacts with TMEM177 in a COX20-dependent manner. Interacts with COX20. Interacts with COX16. Cu cation is required as a cofactor.

The protein localises to the mitochondrion inner membrane. It carries out the reaction 4 Fe(II)-[cytochrome c] + O2 + 8 H(+)(in) = 4 Fe(III)-[cytochrome c] + 2 H2O + 4 H(+)(out). Functionally, component of the cytochrome c oxidase, the last enzyme in the mitochondrial electron transport chain which drives oxidative phosphorylation. The respiratory chain contains 3 multisubunit complexes succinate dehydrogenase (complex II, CII), ubiquinol-cytochrome c oxidoreductase (cytochrome b-c1 complex, complex III, CIII) and cytochrome c oxidase (complex IV, CIV), that cooperate to transfer electrons derived from NADH and succinate to molecular oxygen, creating an electrochemical gradient over the inner membrane that drives transmembrane transport and the ATP synthase. Cytochrome c oxidase is the component of the respiratory chain that catalyzes the reduction of oxygen to water. Electrons originating from reduced cytochrome c in the intermembrane space (IMS) are transferred via the dinuclear copper A center (CU(A)) of subunit 2 and heme A of subunit 1 to the active site in subunit 1, a binuclear center (BNC) formed by heme A3 and copper B (CU(B)). The BNC reduces molecular oxygen to 2 water molecules using 4 electrons from cytochrome c in the IMS and 4 protons from the mitochondrial matrix. The chain is Cytochrome c oxidase subunit 2 (MT-CO2) from Equus asinus (Donkey).